A 667-amino-acid polypeptide reads, in one-letter code: MGSSRLAALLLPLLLIVIDLSDSAGIGFRHLPHWNTRCPLASHTDDSFTGSSAYIPCRTWWALFSTKPWCVRVWHCSRCLCQHLLSGGSGLQRGLFHLLVQKSKKSSTFKFYRRHKMPAPAQRKLLPRRHLSEKSHHISIPSPDISHKGLRSKRTQPSDPETWESLPRLDSQRHGGPEFSFDLLPEARAIRVTISSGPEVSVRLCHQWALECEELSSPYDVQKIVSGGHTVELPYEFLLPCLCIEASYLQEDTVRRKKCPFQSWPEAYGSDFWKSVHFTDYSQHTQMVMALTLRCPLKLEAALCQRHDWHTLCKDLPNATARESDGWYVLEKVDLHPQLCFKFSFGNSSHVECPHQTGSLTSWNVSMDTQAQQLILHFSSRMHATFSAAWSLPGLGQDTLVPPVYTVSQARGSSPVSLDLIIPFLRPGCCVLVWRSDVQFAWKHLLCPDVSYRHLGLLILALLALLTLLGVVLALTCRRPQSGPGPARPVLLLHAADSEAQRRLVGALAELLRAALGGGRDVIVDLWEGRHVARVGPLPWLWAARTRVAREQGTVLLLWSGADLRPVSGPDPRAAPLLALLHAAPRPLLLLAYFSRLCAKGDIPPPLRALPRYRLLRDLPRLLRALDARPFAEATSWGRLGARQRRQSRLELCSRLEREAARLADLG.

Positions Met1 to Ser23 are cleaved as a signal peptide. Topologically, residues Ala24–His454 are extracellular. Residues Leu126 to His174 are disordered. Residues Asn318, Asn347, and Asn364 are each glycosylated (N-linked (GlcNAc...) asparagine). A helical membrane pass occupies residues Leu455 to Leu475. Over Thr476 to Gly667 the chain is Cytoplasmic. The region spanning Ala487 to Arg624 is the SEFIR domain.

As to quaternary structure, forms heterodimers with IL17RA; the heterodimer binds IL17C. In terms of tissue distribution, predominantly expressed in mucosal tissues with high levels in keratinocytes and colon epithelial cells. Very low expression in dermal fibroblasts. Expressed in various tumor cell lines.

The protein localises to the cell membrane. It localises to the cytoplasm. Its subcellular location is the secreted. In terms of biological role, specific functional receptor for IL17C. May be signaling through the NF-kappa-B and MAPK pathways. May require TRAF3IP2 /ACT1 for signaling. May be a crucial regulator in innate immunity to bacterial pathogens. Isoform 2 and isoform 4 may be either cytoplasmic inactive or dominant active forms. Isoform 3 and isoform 5 may act as soluble decoy receptors. In Homo sapiens (Human), this protein is Interleukin-17 receptor E (IL17RE).